Here is a 307-residue protein sequence, read N- to C-terminus: Ribosomal RNA small subunit methyltransferase H (307 aa).

S-adenosyl-L-methionine-binding positions include 32-34 (GGH), D52, F78, D99, and Q106.

This sequence belongs to the methyltransferase superfamily. RsmH family.

The protein localises to the cytoplasm. It catalyses the reaction cytidine(1402) in 16S rRNA + S-adenosyl-L-methionine = N(4)-methylcytidine(1402) in 16S rRNA + S-adenosyl-L-homocysteine + H(+). In terms of biological role, specifically methylates the N4 position of cytidine in position 1402 (C1402) of 16S rRNA. The sequence is that of Ribosomal RNA small subunit methyltransferase H from Acinetobacter baumannii (strain AB0057).